The chain runs to 129 residues: Small ribosomal subunit protein uS11 (129 aa).

The protein belongs to the universal ribosomal protein uS11 family. In terms of assembly, part of the 30S ribosomal subunit. Interacts with proteins S7 and S18. Binds to IF-3.

Its function is as follows. Located on the platform of the 30S subunit, it bridges several disparate RNA helices of the 16S rRNA. Forms part of the Shine-Dalgarno cleft in the 70S ribosome. The protein is Small ribosomal subunit protein uS11 of Sphingopyxis alaskensis (strain DSM 13593 / LMG 18877 / RB2256) (Sphingomonas alaskensis).